The primary structure comprises 1152 residues: Calcium-activated potassium channel subunit alpha-1 (1152 aa).

Residues 1-37 (MSSNIHANHLSLDASSSSSSSSSSSSSSSSSSSSVHE) form a disordered region. The Extracellular segment spans residues 1-60 (MSSNIHANHLSLDASSSSSSSSSSSSSSSSSSSSVHEPKMDALIIPVTMEVPCDSRGQRM). The span at 15-34 (SSSSSSSSSSSSSSSSSSSS) shows a compositional bias: low complexity. Residues 61–81 (WWAFLASSMVTFFGGLFIILL) form a helical membrane-spanning segment. Residues 82 to 152 (WRTLKYLWTV…MISAQTLTGR (71 aa)) are Cytoplasmic-facing. S-palmitoyl cysteine attachment occurs at residues Cys92, Cys93, and Cys95. A helical transmembrane segment spans residues 153 to 173 (VLVVLVFALSIGALVIYFIDS). At 174–188 (SNPIESCQNFYKDFT) the chain is on the extracellular side. Residues 189-209 (LQIDMAFNVFFLLYFGLRFIA) traverse the membrane as a helical segment. Over 210–213 (ANDK) the chain is Cytoplasmic. Residues 214 to 234 (LWFWLEVNSVVDFFTVPPVFV) traverse the membrane as a helical segment. The Extracellular portion of the chain corresponds to 235 to 238 (SVYL). The chain crosses the membrane as a helical; Voltage-sensor span at residues 239–259 (NRSWLGLRFLRALRLIQFSEI). Residues 260 to 274 (LQFLNILKTSNSIKL) lie on the Cytoplasmic side of the membrane. The helical transmembrane segment at 275–295 (VNLLSIFISTWLTAAGFIHLV) threads the bilayer. The Extracellular segment spans residues 296 to 309 (ENSGDPWENFQNNQ). The segment at residues 310–332 (ALTYWECVYLLMVTMSTVGYGDV) is an intramembrane region (pore-forming). Positions 326–329 (TVGY) match the Selectivity for potassium motif. Residues 333–341 (YAKTTLGRL) lie on the Extracellular side of the membrane. A helical membrane pass occupies residues 342 to 362 (FMVFFILGGLAMFASYVPEII). At 363–1152 (ELIGNRKKYG…KQKYVQEERL (790 aa)) the chain is on the cytoplasmic side. The region spanning 381–523 (RKHIVVCGHI…WNWKEGDDAI (143 aa)) is the RCK N-terminal 1 domain. Mg(2+)-binding residues include Glu413, Gln436, and Glu438. Residues 530-550 (LGFIAQSCLAQGLSTMLANLF) form a segment S7 region. The segment at 587–607 (LSFPTVCELCFVKLKLLMIAI) is segment S8. The interval 651–655 (CKACH) is heme-binding motif. Residues 675–703 (EQPSTLSPKKKQRNGGMRNSPSSSPKLMR) are disordered. Thr679 carries the post-translational modification Phosphothreonine. Phosphoserine is present on residues Ser681, Ser694, and Ser698. A segment S9 region spans residues 753–773 (VLSGHVVVCIFGDVSSALIGL). Residues 755 to 899 (SGHVVVCIFG…MDRSSPDNSP (145 aa)) form the RCK N-terminal 2 domain. The residue at position 886 (Thr886) is a Phosphothreonine. Phosphoserine is present on residues Ser894 and Ser898. The Calcium bowl signature appears at 919–941 (TELVNDTNVQFLDQDDDDDPDTE). Residues Gln928, Asp931, Asp934, and Asp936 each contribute to the Ca(2+) site. Positions 948-968 (FACGTAFAVSVLDSLMSATYF) are segment S10. The span at 1102-1127 (RASLSHSSHSSQSSSKKSSSVHSIPS) shows a compositional bias: low complexity. Residues 1102–1152 (RASLSHSSHSSQSSSKKSSSVHSIPSTANRQNRPKSRESRDKQKYVQEERL) are disordered. A compositionally biased stretch (basic and acidic residues) spans 1136–1152 (KSRESRDKQKYVQEERL). Phosphoserine is present on residues Ser1137 and Ser1140.

It belongs to the potassium channel family. Calcium-activated (TC 1.A.1.3) subfamily. KCa1.1/KCNMA1 sub-subfamily. In terms of assembly, homotetramer; which constitutes the calcium-activated potassium channel. Interacts with beta subunits KCNMB1, KCNMB2, KCNMB3 and KCNMB4. Interacts with gamma subunits LRRC26, LRRC38, LRRC52 and LRRC55. Beta and gamma subunits are accessory, and modulate its activity. Interacts with RAB11B. Phosphorylated. Phosphorylation by kinases such as PKA and/or PKG. In smooth muscles, phosphorylation affects its activity. In terms of processing, palmitoylation by ZDHHC22 and ZDHHC23 within the intracellular linker between the S0 and S1 transmembrane domains regulates localization to the plasma membrane. Depalmitoylated by LYPLA1 and LYPLAL1, leading to retard exit from the trans-Golgi network.

The protein localises to the cell membrane. The catalysed reaction is K(+)(in) = K(+)(out). Its activity is regulated as follows. Ethanol and carbon monoxide-bound heme increase channel activation. Heme inhibits channel activation. Functionally, potassium channel activated by both membrane depolarization or increase in cytosolic Ca(2+) that mediates export of K(+). It is also activated by the concentration of cytosolic Mg(2+). Its activation dampens the excitatory events that elevate the cytosolic Ca(2+) concentration and/or depolarize the cell membrane. It therefore contributes to repolarization of the membrane potential. Plays a key role in controlling excitability in a number of systems, such as regulation of the contraction of smooth muscle, the tuning of hair cells in the cochlea, regulation of transmitter release, and innate immunity. In smooth muscles, its activation by high level of Ca(2+), caused by ryanodine receptors in the sarcoplasmic reticulum, regulates the membrane potential. In cochlea cells, its number and kinetic properties partly determine the characteristic frequency of each hair cell and thereby helps to establish a tonotopic map. Kinetics of KCNMA1 channels are determined by alternative splicing, phosphorylation status and its combination with modulating beta subunits. Highly sensitive to both iberiotoxin (IbTx) and charybdotoxin (CTX). In Sus scrofa (Pig), this protein is Calcium-activated potassium channel subunit alpha-1 (KCNMA1).